The following is a 661-amino-acid chain: MAESEENSVLFPIFILTMMAIPLVPYTFVKLSRAFSKKQRSIHCQCLECDRSGKYKRSISQSISSFTSCSNLTVVLLWIVMIFLIYHTKNMSRESQLFEPFGILGLEPGASDSEIKKAYRRLSIQYHPDKNPDPEANKYFVESIAKAYQALTDPLSRENFEKYGHPDGRQGYTMGIALPQFILNMNGESGGILLLCTVGLCILLPLVIASIYLWRSSKYTGNHVKLQTRQAYFELLQPSLTPSKVMDIFIRAAEYAEISVRKSDDESLQKLFMSVKSELNLDPKKLKQEEAKFWKKHPATIKTELLIQKQLTRESSVLSPTLQRDFRHVLEFAPRLLEDLIKMAVIPRNEQGRGWLRPALGVMELSQCIVQAVPLSARKSSSEDIAPFLQLPHFNESIAKSIALQVKSFQKFQELSLAERSKLLREVVSLSETDVQDIEKVLEMIPSLKINVTCKTEGEEGIQEGDIMTVQAWITLKRPNGLIGAIPHSPYFPFHKEENFWVLLADSNHVWFFQKVKFMDEAGAIAAASNTITETMEPLGASVKETNDAVKEAVEKVKSGSRLVMGRLLAPGEGTYNLTCFCLSDTWIGCDQKTSLKVEVLKRTRDVEGENAEEGLEEEDDEIEEEDYESEYSEDEEDKKRGSKKKVNKESSSEESGSDEE.

Over 1–8 (MAESEENS) the chain is Lumenal. A helical membrane pass occupies residues 9 to 29 (VLFPIFILTMMAIPLVPYTFV). Residues 30 to 65 (KLSRAFSKKQRSIHCQCLECDRSGKYKRSISQSISS) are Cytoplasmic-facing. A helical membrane pass occupies residues 66–86 (FTSCSNLTVVLLWIVMIFLIY). Residues 87–190 (HTKNMSRESQ…FILNMNGESG (104 aa)) are Lumenal-facing. Asparagine 90 carries N-linked (GlcNAc...) asparagine glycosylation. The region spanning 99 to 164 (EPFGILGLEP…LSRENFEKYG (66 aa)) is the J domain. The chain crosses the membrane as a helical span at residues 191–211 (GILLLCTVGLCILLPLVIASI). The SEC63 domain occupies 206–597 (LVIASIYLWR…IGCDQKTSLK (392 aa)). Residues 212 to 661 (YLWRSSKYTG…SSEESGSDEE (450 aa)) lie on the Cytoplasmic side of the membrane. Residues 608-661 (EGENAEEGLEEEDDEIEEEDYESEYSEDEEDKKRGSKKKVNKESSSEESGSDEE) form a disordered region. Residues 609 to 637 (GENAEEGLEEEDDEIEEEDYESEYSEDEE) show a composition bias toward acidic residues.

Interacts with OEP61/TPR7. As to expression, expressed in leaves, flower buds and flowers.

Its subcellular location is the endoplasmic reticulum membrane. Its function is as follows. Required for integral membrane and secreted preprotein translocation across the endoplasmic reticulum membrane. This chain is DnaJ protein ERDJ2B (ERDJ2B), found in Arabidopsis thaliana (Mouse-ear cress).